The chain runs to 476 residues: UDP-N-acetylmuramate--L-alanine ligase (476 aa).

115-121 (GTHGKTT) lines the ATP pocket.

Belongs to the MurCDEF family.

It is found in the cytoplasm. The enzyme catalyses UDP-N-acetyl-alpha-D-muramate + L-alanine + ATP = UDP-N-acetyl-alpha-D-muramoyl-L-alanine + ADP + phosphate + H(+). The protein operates within cell wall biogenesis; peptidoglycan biosynthesis. Its function is as follows. Cell wall formation. This Paramagnetospirillum magneticum (strain ATCC 700264 / AMB-1) (Magnetospirillum magneticum) protein is UDP-N-acetylmuramate--L-alanine ligase.